The following is a 92-amino-acid chain: Kinetoplastid membrane protein 11 (92 aa).

The protein belongs to the KMP-11 family. Monomer.

It is found in the cytoplasm. The protein localises to the cytoskeleton. May be involved in the regulation of the cytoskeleton through interaction with the subpellicular microtubules. May be involved in parasite mobility and attachment to the surface of the host cell. Behaves as a strong immunogen during infection. This chain is Kinetoplastid membrane protein 11 (KMP-11/1), found in Trypanosoma brucei brucei.